We begin with the raw amino-acid sequence, 313 residues long: Pyrimidine-specific ribonucleoside hydrolase RihB (313 aa).

Asp-11 functions as the Proton acceptor in the catalytic mechanism. The Ca(2+) site is built by Asp-11, Asp-16, and Val-124. Substrate is bound by residues Gln-227 and His-239. Ca(2+) is bound at residue Asp-240.

It belongs to the IUNH family. RihB subfamily. Homotetramer. Requires Ca(2+) as cofactor.

The catalysed reaction is a pyrimidine ribonucleoside + H2O = a pyrimidine nucleobase + D-ribose. Its function is as follows. Hydrolyzes cytidine or uridine to ribose and cytosine or uracil, respectively. Has a clear preference for cytidine over uridine. Strictly specific for ribonucleosides. In Escherichia coli O1:K1 / APEC, this protein is Pyrimidine-specific ribonucleoside hydrolase RihB.